Here is a 339-residue protein sequence, read N- to C-terminus: UDP-N-acetylenolpyruvoylglucosamine reductase (339 aa).

The 171-residue stretch at 19 to 189 (VDVQARLFAE…LRVRFKLSRV (171 aa)) folds into the FAD-binding PCMH-type domain. Arg-166 is a catalytic residue. Ser-239 acts as the Proton donor in catalysis. Glu-335 is an active-site residue.

Belongs to the MurB family. The cofactor is FAD.

It localises to the cytoplasm. The catalysed reaction is UDP-N-acetyl-alpha-D-muramate + NADP(+) = UDP-N-acetyl-3-O-(1-carboxyvinyl)-alpha-D-glucosamine + NADPH + H(+). It participates in cell wall biogenesis; peptidoglycan biosynthesis. Its function is as follows. Cell wall formation. This chain is UDP-N-acetylenolpyruvoylglucosamine reductase, found in Pseudomonas syringae pv. syringae (strain B728a).